The primary structure comprises 206 residues: Thiamine-phosphate synthase (206 aa).

4-amino-2-methyl-5-(diphosphooxymethyl)pyrimidine-binding positions include 38–42 and N70; that span reads QLREK. Mg(2+) contacts are provided by D71 and D90. T109 contacts 4-amino-2-methyl-5-(diphosphooxymethyl)pyrimidine. Residue 135–137 coordinates 2-[(2R,5Z)-2-carboxy-4-methylthiazol-5(2H)-ylidene]ethyl phosphate; that stretch reads TST. K138 contacts 4-amino-2-methyl-5-(diphosphooxymethyl)pyrimidine. Residues G165 and 185 to 186 each bind 2-[(2R,5Z)-2-carboxy-4-methylthiazol-5(2H)-ylidene]ethyl phosphate; that span reads VS.

It belongs to the thiamine-phosphate synthase family. The cofactor is Mg(2+).

The catalysed reaction is 2-[(2R,5Z)-2-carboxy-4-methylthiazol-5(2H)-ylidene]ethyl phosphate + 4-amino-2-methyl-5-(diphosphooxymethyl)pyrimidine + 2 H(+) = thiamine phosphate + CO2 + diphosphate. It carries out the reaction 2-(2-carboxy-4-methylthiazol-5-yl)ethyl phosphate + 4-amino-2-methyl-5-(diphosphooxymethyl)pyrimidine + 2 H(+) = thiamine phosphate + CO2 + diphosphate. The enzyme catalyses 4-methyl-5-(2-phosphooxyethyl)-thiazole + 4-amino-2-methyl-5-(diphosphooxymethyl)pyrimidine + H(+) = thiamine phosphate + diphosphate. The protein operates within cofactor biosynthesis; thiamine diphosphate biosynthesis; thiamine phosphate from 4-amino-2-methyl-5-diphosphomethylpyrimidine and 4-methyl-5-(2-phosphoethyl)-thiazole: step 1/1. In terms of biological role, condenses 4-methyl-5-(beta-hydroxyethyl)thiazole monophosphate (THZ-P) and 2-methyl-4-amino-5-hydroxymethyl pyrimidine pyrophosphate (HMP-PP) to form thiamine monophosphate (TMP). The chain is Thiamine-phosphate synthase from Fusobacterium nucleatum subsp. nucleatum (strain ATCC 25586 / DSM 15643 / BCRC 10681 / CIP 101130 / JCM 8532 / KCTC 2640 / LMG 13131 / VPI 4355).